We begin with the raw amino-acid sequence, 245 residues long: Ribosomal RNA large subunit methyltransferase E (245 aa).

S-adenosyl-L-methionine contacts are provided by glycine 58, tryptophan 60, aspartate 78, aspartate 96, and aspartate 123. The active-site Proton acceptor is the lysine 163.

The protein belongs to the class I-like SAM-binding methyltransferase superfamily. RNA methyltransferase RlmE family.

Its subcellular location is the cytoplasm. It catalyses the reaction uridine(2552) in 23S rRNA + S-adenosyl-L-methionine = 2'-O-methyluridine(2552) in 23S rRNA + S-adenosyl-L-homocysteine + H(+). Its function is as follows. Specifically methylates the uridine in position 2552 of 23S rRNA at the 2'-O position of the ribose in the fully assembled 50S ribosomal subunit. In Methanocaldococcus jannaschii (strain ATCC 43067 / DSM 2661 / JAL-1 / JCM 10045 / NBRC 100440) (Methanococcus jannaschii), this protein is Ribosomal RNA large subunit methyltransferase E.